A 361-amino-acid polypeptide reads, in one-letter code: DNA polymerase subunit gamma-2, mitochondrial (361 aa).

Residues 1 to 18 (MSRIQRCFKSLASAGFFR) constitute a mitochondrion transit peptide.

As to quaternary structure, component of the DNA polymerase gamma complex consisting of two subunits: the catalytic subunit DNApol-gamma/DNApolG1 and the accessory subunit PolG2/DNApol-gamma35. In terms of tissue distribution, expressed in ovaries (at protein level).

It localises to the mitochondrion. As accessory component of the DNA polymerase gamma complex is involved in the replication of mitochondrial DNA. Does not bind DNA. Essential for mitochondrial DNA maintenance and larval development. The sequence is that of DNA polymerase subunit gamma-2, mitochondrial from Drosophila melanogaster (Fruit fly).